A 177-amino-acid chain; its full sequence is Calcium-binding protein CML38 (177 aa).

The segment covering 1–11 (MKNNTQPQSSF) has biased composition (polar residues). The disordered stretch occupies residues 1-44 (MKNNTQPQSSFKKLCRKLSPKREDSAGEIQQHNSSNGEDKNREL). EF-hand domains follow at residues 39–74 (DKNR…LGEQ), 75–110 (LSDE…DDEE), 111–146 (EKKM…LGES), and 147–177 (RTTD…LMMR). Ca(2+) is bound by residues D52, N54, D56, R58, E63, D88, D90, D92, M94, and E99. Ca(2+) contacts are provided by D160, N162, D164, and E171.

As to quaternary structure, binds to ABCG36. As to expression, expressed in cotyledons and guard cells of young leaves. In mature root, expressed in the epidermis, trichoblasts, young lateral root and root tip. Expressed from stage 9 to 15 of flower development in anther wall.

In terms of biological role, potential calcium sensor that binds calcium in vitro. The chain is Calcium-binding protein CML38 from Arabidopsis thaliana (Mouse-ear cress).